A 558-amino-acid chain; its full sequence is DNA ligase B (558 aa).

The N6-AMP-lysine intermediate role is filled by Lys-124.

It belongs to the NAD-dependent DNA ligase family. LigB subfamily.

It carries out the reaction NAD(+) + (deoxyribonucleotide)n-3'-hydroxyl + 5'-phospho-(deoxyribonucleotide)m = (deoxyribonucleotide)n+m + AMP + beta-nicotinamide D-nucleotide.. Functionally, catalyzes the formation of phosphodiester linkages between 5'-phosphoryl and 3'-hydroxyl groups in double-stranded DNA using NAD as a coenzyme and as the energy source for the reaction. The chain is DNA ligase B from Klebsiella pneumoniae (strain 342).